Consider the following 886-residue polypeptide: Methanogenesis regulatory histidine kinase FilI (886 aa).

2 helical membrane passes run 7 to 27 (ILAFTGGMILVLALICSTFMC) and 270 to 290 (VVGIFLASLLFGGLILLFLEL). In terms of domain architecture, HAMP spans 290 to 344 (LSILMPLATITSSVEAIREQEKGQGSRIPTVGPAELATLAESINEMLDHLESYNQ). Residues 349–419 (SEKRFRTIVD…EKDAGVLSGE (71 aa)) enclose the PAS domain. Residues 421–473 (FVGEVSAHTRAGSSMTFHAVKVPLRDDRGQVTGICGIARDITDIKEAGVELLK) form the PAC domain. Residues 674–886 (TVSHDLRSPL…TCVLFTLPTP (213 aa)) form the Histidine kinase domain. Residue His677 is modified to Phosphohistidine; by autocatalysis.

In terms of processing, autophosphorylated.

The protein localises to the cell membrane. The catalysed reaction is ATP + protein L-histidine = ADP + protein N-phospho-L-histidine.. Functionally, member of the two-component regulatory system FilI/FilRs, which is involved in the regulation of methanogenesis. Autophosphorylates and specifically transfers the phosphoryl group to both FilR1 and FilR2. Could also catalyze the synthesis of the quorum sensing (QS) signal molecules carboxyl-acyl homoserine lactones (AHLs), which regulate the transition of the cellular morphology from short cells to filaments and of the carbon metabolic flux from biomass formation to methane production. In Methanothrix harundinacea (strain 6Ac) (Methanosaeta harundinacea), this protein is Methanogenesis regulatory histidine kinase FilI.